The following is a 413-amino-acid chain: Tyrosine--tRNA ligase 2 (413 aa).

Residues 58–67 (PSAPDVHLGH) carry the 'HIGH' region motif. 2 tandem repeats follow at residues 89–94 (GDFTGK) and 96–101 (GDPTGK). Residues 89–101 (GDFTGKIGDPTGK) are 2 X 6 AA tandem repeats. A 'KMSKS' region motif is present at residues 242–246 (KMSKS). ATP is bound at residue lysine 245. One can recognise an S4 RNA-binding domain in the interval 353-413 (IAMIDLLVKL…VGKRKFLKLQ (61 aa)).

The protein belongs to the class-I aminoacyl-tRNA synthetase family. TyrS type 2 subfamily. As to quaternary structure, homodimer.

It is found in the cytoplasm. It catalyses the reaction tRNA(Tyr) + L-tyrosine + ATP = L-tyrosyl-tRNA(Tyr) + AMP + diphosphate + H(+). Its function is as follows. Catalyzes the attachment of tyrosine to tRNA(Tyr) in a two-step reaction: tyrosine is first activated by ATP to form Tyr-AMP and then transferred to the acceptor end of tRNA(Tyr). The sequence is that of Tyrosine--tRNA ligase 2 from Bacillus subtilis (strain 168).